Reading from the N-terminus, the 419-residue chain is L-rhamnose isomerase (419 aa).

3 residues coordinate Mn(2+): H262, D294, and D296.

This sequence belongs to the rhamnose isomerase family. As to quaternary structure, homotetramer. The cofactor is Mn(2+).

It localises to the cytoplasm. It catalyses the reaction L-rhamnopyranose = L-rhamnulose. It participates in carbohydrate degradation; L-rhamnose degradation; glycerone phosphate from L-rhamnose: step 1/3. Functionally, catalyzes the interconversion of L-rhamnose and L-rhamnulose. The chain is L-rhamnose isomerase from Salmonella enteritidis PT4 (strain P125109).